The sequence spans 376 residues: Chaperone protein DnaJ (376 aa).

Residues 4-70 (DYYQILGVSK…QKRAAYDRFG (67 aa)) enclose the J domain. The CR-type zinc finger occupies 139–217 (GVEKNISFSS…CHGLGRYHKQ (79 aa)). Cys152, Cys155, Cys169, Cys172, Cys191, Cys194, Cys205, and Cys208 together coordinate Zn(2+). CXXCXGXG motif repeat units follow at residues 152-159 (CDTCHGSG), 169-176 (CDACGGVG), 191-198 (CHKCQGNG), and 205-212 (CKKCHGLG).

This sequence belongs to the DnaJ family. Homodimer. Zn(2+) is required as a cofactor.

It is found in the cytoplasm. Participates actively in the response to hyperosmotic and heat shock by preventing the aggregation of stress-denatured proteins and by disaggregating proteins, also in an autonomous, DnaK-independent fashion. Unfolded proteins bind initially to DnaJ; upon interaction with the DnaJ-bound protein, DnaK hydrolyzes its bound ATP, resulting in the formation of a stable complex. GrpE releases ADP from DnaK; ATP binding to DnaK triggers the release of the substrate protein, thus completing the reaction cycle. Several rounds of ATP-dependent interactions between DnaJ, DnaK and GrpE are required for fully efficient folding. Also involved, together with DnaK and GrpE, in the DNA replication of plasmids through activation of initiation proteins. In Rickettsia bellii (strain RML369-C), this protein is Chaperone protein DnaJ.